The chain runs to 1444 residues: MSFASILSGPAEERSPPKRQSPPPETTPAPVTSTPREATQLSPPPPPHVPPSHQKVKEQEQVLPRLEKKPSSEKRRRNAEQDNKAGEPSNGILSNGIPEPTKTTTQSWSFLSPRKVLSERESETINKLMVEIDNAEKSDVEAPGFEEEYEQYKLQCKRRALHTLKEEGIKRKRRRNTFLVNLGKSLEKQASAGMDRFRIANEASVISEVQAKEIQDEKERKKDMQRKRRRENTVRLEMQKKLEAERKANKAQDSAEKAKFLREAERAQRKIKTTKRALEGVTAPEEIGEVTPLAPNLEGGTTSSFHIGRSSPSRRKSGRGGPVTRPKKSKEQKQAEKDAAEAAYAAMENDEPLPLAPKEDPRKESLKKEAKGSRSKESSPAPLSAFETKGYNQIYEQIWRDIARKDIPKVYRIKALSLSTRQENLRKTAQLASKQSRKWQERTNKSMKDTQARAKRTMREMMSFWKRNEREERDLRRLAERQEIESAKKAEAEREANRQRRKLNFLISQTELYSHFIGRKIKGAEGDSGDTAVEGSDETVQPGKDEEHAMEDAGAKVTNFEDLDFDAEDETALRQAAMANAQNAVKEAQDRARAFNDGQDHMAALDEGELNFQNPTSLGDIEISQPTMLTAKLKEYQLKGLNWLVNLYEQGINGILADEMGLGKTIQSISVMAYLAEVHNIWGPFLVIAPASTLHNWQQEITKFVPDIKVLPYWGSAKDRKILRKFWDRKHITYTKESEFHVLVTSYQLVVLDAQYFQKVKWQYMILDEAQAIKSSQSSRWKNLLGFSCRNRLLLTGTPIQNNMQELWALLHFIMPTLFDSHDEFSEWFSKDIESHAQSNTKLNEDQLKRLHMILKPFMLRRVKKHVQQELGDKVEKDVFCDLTYRQRAYYTNLRNRVSIMDLIEKAAVGDEADSTTLMNLVMQFRKVCNHPDLFERAETKSPFSVAHFAETASFVREGQNVDVGYSTRNLIEYPLPRLLCGSDGRVDVAGPGNLHAGFRGKYLAHLMNIFAPENIKHSAEHDGTFSFLRFVDTSINEAYEQSHQGIFERAVRRRGKPNRLSRLNVVYDDDKATMASALPHTMFNIVQRNDQHAINDVTTEGYMRELTTVAQSAFERKGLGIIEPCVSPAASAPPITVSSSSRAPLSEMNDSLFNVSVRHALFSTPSKQLEQQILEKKLDPIPYSLPPMLPQPISIKGRYTHIEVPSMRRFVTDSGKLAKLDELLRELKAGGHRVLLYFQMTRMIDLMEEYLTYRNYKYCRLDGSTKLEDRRDTVADFQQRPEIFVFLLSTRAGGLGINLTAADTVIFYDSDWNPTIDSQAMDRAHRLGQTRQVTVYRLITRGTIEERIRKRALQKEEVQRVVISGGAAGGVDFNTRNRESRTKDIAMWLADDEQAELIEQKEKEALDRGEVFGASKGGKKAAQKRKRDITLDDMYHEVSFAIH.

Disordered stretches follow at residues 1 to 115 (MSFA…SPRK), 215 to 238 (QDEKERKKDMQRKRRRENTVRLEM), 269 to 384 (RKIK…APLS), 432 to 454 (ASKQSRKWQERTNKSMKDTQARA), and 524 to 551 (AEGDSGDTAVEGSDETVQPGKDEEHAME). Residues 29 to 41 (APVTSTPREATQL) show a composition bias toward polar residues. Over residues 55 to 85 (KVKEQEQVLPRLEKKPSSEKRRRNAEQDNKA) the composition is skewed to basic and acidic residues. Polar residues predominate over residues 101–110 (TKTTTQSWSF). Residues 207 to 283 (SEVQAKEIQD…TKRALEGVTA (77 aa)) adopt a coiled-coil conformation. Basic and acidic residues-rich tracts occupy residues 329–340 (SKEQKQAEKDAA), 357–377 (PKEDPRKESLKKEAKGSRSKE), and 438–452 (KWQERTNKSMKDTQA). Residues 398-523 (IWRDIARKDI…SHFIGRKIKG (126 aa)) enclose the DBINO domain. The stretch at 440–511 (QERTNKSMKD…KLNFLISQTE (72 aa)) forms a coiled coil. In terms of domain architecture, Helicase ATP-binding spans 645 to 817 (VNLYEQGING…WALLHFIMPT (173 aa)). An ATP-binding site is contributed by 658-665 (DEMGLGKT). A DEAQ box motif is present at residues 768–771 (DEAQ). In terms of domain architecture, Helicase C-terminal spans 1220-1380 (KLDELLRELK…GVDFNTRNRE (161 aa)).

Belongs to the SNF2/RAD54 helicase family. As to quaternary structure, component of the INO80 chromatin-remodeling complex.

It localises to the nucleus. The catalysed reaction is ATP + H2O = ADP + phosphate + H(+). In terms of biological role, ATPase component of the INO80 complex which remodels chromatin by shifting nucleosomes and is involved in DNA repair. This is Chromatin-remodeling ATPase INO80 (ino80) from Aspergillus oryzae (strain ATCC 42149 / RIB 40) (Yellow koji mold).